Reading from the N-terminus, the 211-residue chain is Porin MspA (211 aa).

The first 27 residues, 1–27 (MKAISRVLIAMVAAIAALFTSTGTSHA), serve as a signal peptide directing secretion.

This sequence belongs to the mycobacterial porin (TC 1.B.24) family. In terms of assembly, forms very stable octamers. Isolated as a 100 kDa complex that can be reduced to monomers upon boiling in 80% dimethyl sulfoxide for 15 minutes. Structures show a goblet with the wide end on the exterior of the outer membrane and a central channel. It is not known if mixed oligomers of MspA with other Msp subunits form in vivo.

Its subcellular location is the cell outer membrane. It localises to the secreted. The protein localises to the cell wall. In terms of biological role, the major porin in this organism, forms a water-filled channel which favors the permeation of cations, amino acids, iron Fe(3+) and less efficiently phosphate. Does not transport Fe-ExoMS, the predominant siderophore. Plays a role in transport of beta-lactamase and hydrophilic fluoroquinolone antibiotics such as norfloxacin as well as chloramphenicol. There are about 2400 porins in wild-type, 800 in an mspA deletion and 150 in a double mspA-mspC deletion. Different conductance values with maxima at 2.3 and 4.6 nanosiemens might be caused by a simultaneous reconstitution of MspA channels into the membrane or by the existence of different MspA conformations. The protein is Porin MspA (mspA) of Mycolicibacterium smegmatis (strain ATCC 700084 / mc(2)155) (Mycobacterium smegmatis).